Here is a 975-residue protein sequence, read N- to C-terminus: Leucine-zipper-like transcriptional regulator 1 homolog (975 aa).

A compositionally biased stretch (gly residues) spans 16-32; sequence RGGGGGGCGGGGAGGSA. Disordered stretches follow at residues 16–41 and 158–186; these read RGGGGGGCGGGGAGGSASGSRSTSGS and MSSSMRSSRGNGGGGAASSSHPPGSSCSS. A compositionally biased stretch (low complexity) spans 174–186; sequence ASSSHPPGSSCSS. Kelch repeat units lie at residues 263 to 312, 314 to 369, 370 to 417, 421 to 467, 478 to 524, and 530 to 581; these read AMFV…VAGS, MFIF…VYDN, KMWI…PVAV, AMYV…PSRR, FLYV…FHAS, and AMYI…FIVG. BTB domains lie at 574–670 and 801–870; these read CDIQ…DLKD and CDIS…KMPP.

This sequence belongs to the LZTR1 family. In terms of assembly, component of some BCR (BTB-CUL3-RBX1) E3 ubiquitin-protein ligase complex. Expressed in Rdl-expressing neurons of the mushroom body, the neurons projecting to the LC9 optic glomerulus and in a neuronal cluster near the subesophageal ganglion (at protein level).

It participates in protein modification; protein ubiquitination. Inhibitor of Ras signaling. Acts as a substrate-specific adapter of a BCR (BTB-CUL3-RBX1) E3 ubiquitin-protein ligase complex that mediates ubiquitination of Ras. Together with Nf1, plays an important role for normal sleep behavior, mainly during the night. Might affect sleep by modulating GABA signaling in Rdl-expressing neurons. Might play a role in the regulation of brain glycogen metabolism and organismal levels of triglycerides. This Drosophila melanogaster (Fruit fly) protein is Leucine-zipper-like transcriptional regulator 1 homolog.